The chain runs to 367 residues: Glutamate 5-kinase (367 aa).

Lys-10 contributes to the ATP binding site. Residues Ser-50, Asp-137, and Asn-149 each contribute to the substrate site. 169-170 (TD) provides a ligand contact to ATP. The 79-residue stretch at 275-353 (AGEITVDEGA…QQIDAILGYE (79 aa)) folds into the PUA domain.

It belongs to the glutamate 5-kinase family.

It localises to the cytoplasm. The enzyme catalyses L-glutamate + ATP = L-glutamyl 5-phosphate + ADP. Its pathway is amino-acid biosynthesis; L-proline biosynthesis; L-glutamate 5-semialdehyde from L-glutamate: step 1/2. Functionally, catalyzes the transfer of a phosphate group to glutamate to form L-glutamate 5-phosphate. This Salmonella paratyphi B (strain ATCC BAA-1250 / SPB7) protein is Glutamate 5-kinase.